Reading from the N-terminus, the 171-residue chain is MTTRQSSFSYEEILTCGRGEMFGSGNAQLPLPPMLMFNRITEISETGGPHDKGFVRAEFDITPDLWFFPCHFMGDPVMPGCLGLDAMWQLTGFFLGWLGEPGKGRALSTGEVKFTGMVTPKTKLVEYGIDFKRVMRGRLVLGIADGWMKADGEVIYKATDLRVGLFQEKAD.

The active site involves His-71.

It belongs to the thioester dehydratase family. FabA subfamily. As to quaternary structure, homodimer.

Its subcellular location is the cytoplasm. It catalyses the reaction a (3R)-hydroxyacyl-[ACP] = a (2E)-enoyl-[ACP] + H2O. The catalysed reaction is (3R)-hydroxydecanoyl-[ACP] = (2E)-decenoyl-[ACP] + H2O. It carries out the reaction (2E)-decenoyl-[ACP] = (3Z)-decenoyl-[ACP]. The protein operates within lipid metabolism; fatty acid biosynthesis. In terms of biological role, necessary for the introduction of cis unsaturation into fatty acids. Catalyzes the dehydration of (3R)-3-hydroxydecanoyl-ACP to E-(2)-decenoyl-ACP and then its isomerization to Z-(3)-decenoyl-ACP. Can catalyze the dehydratase reaction for beta-hydroxyacyl-ACPs with saturated chain lengths up to 16:0, being most active on intermediate chain length. This is 3-hydroxydecanoyl-[acyl-carrier-protein] dehydratase from Sinorhizobium fredii (strain NBRC 101917 / NGR234).